We begin with the raw amino-acid sequence, 279 residues long: Odontogenic ameloblast-associated protein (279 aa).

An N-terminal signal peptide occupies residues 1-15 (MKIIILLGFLGATLS). The segment covering 100-123 (AQGAQAGQVDPSQAQTPPQTQPGP) has biased composition (low complexity). The segment at 100-125 (AQGAQAGQVDPSQAQTPPQTQPGPNH) is disordered. O-linked (GalNAc...) threonine glycans are attached at residues Thr-115 and Thr-119. Residues 127 to 129 (MPY) are interaction with ARHGEF5. Residues Thr-168, Thr-244, Thr-250, Thr-251, Thr-255, and Thr-273 are each glycosylated (O-linked (GalNAc...) threonine).

The protein belongs to the ODAM family. In terms of assembly, interacts (via C-terminus) with ARHGEF5. Post-translationally, O-glycosylated.

The protein localises to the secreted. It is found in the cytoplasm. It localises to the nucleus. Functionally, tooth-associated epithelia protein that probably plays a role in odontogenesis, the complex process that results in the initiation and generation of the tooth. May be incorporated in the enamel matrix at the end of mineralization process. Involved in the induction of RHOA activity via interaction with ARHGEF and expression of downstream factors such as ROCK. Plays a role in attachment of the junctional epithelium to the tooth surface. The sequence is that of Odontogenic ameloblast-associated protein (ODAM) from Macaca mulatta (Rhesus macaque).